Consider the following 154-residue polypeptide: 20 kDa calcium-binding protein (154 aa).

EF-hand domains are found at residues Asp13 to Thr48, Val49 to Glu84, Gln86 to Asp121, and Leu122 to Glu154. Residues Asp62, Asp64, Thr66, Asp99, Asn101, Glu105, Asp110, Asp135, Asp137, Ser139, and Glu146 each coordinate Ca(2+).

It localises to the tegument membrane. Calcium-binding protein. The protein is 20 kDa calcium-binding protein (SM20) of Schistosoma mansoni (Blood fluke).